Reading from the N-terminus, the 295-residue chain is Putative fused nickel transport protein NikMN (295 aa).

Helical transmembrane passes span 8–28, 39–59, 70–90, 98–118, 135–155, 175–195, 211–231, and 268–288; these read LDLS…GYSI, LFGI…PIPG, LAGI…VLTI, GGIT…VFVG, FIAG…EIGI, ALLG…IAAA, LAVI…AELV, and AGTL…GFAL.

The protein belongs to the CbiM family. NikM subfamily.

It is found in the cell membrane. In terms of biological role, may be involved in nickel transport. This chain is Putative fused nickel transport protein NikMN, found in Archaeoglobus fulgidus (strain ATCC 49558 / DSM 4304 / JCM 9628 / NBRC 100126 / VC-16).